The following is a 210-amino-acid chain: Large ribosomal subunit protein uL3 (210 aa).

Belongs to the universal ribosomal protein uL3 family. In terms of assembly, part of the 50S ribosomal subunit. Forms a cluster with proteins L14 and L19.

Its function is as follows. One of the primary rRNA binding proteins, it binds directly near the 3'-end of the 23S rRNA, where it nucleates assembly of the 50S subunit. The sequence is that of Large ribosomal subunit protein uL3 from Geobacter metallireducens (strain ATCC 53774 / DSM 7210 / GS-15).